The primary structure comprises 277 residues: MIRVPSPAKLNLFLHITGRRENGYHELQTIFQLIDLYDWMTFTPISEDEIQIEGLGEVQLEQNLIYRAAQILRPHAQNPCGLHIKIEKNIPMGAGLGGGSSNAATTLIVLNQLWQCGLTEEQLAQFGVKLGADVPIFIYGLNAWAEGIGEHLSFIDLDQKQFIVLKPDCFISTQLLFSQKTLTRDSKPTTFCAYQLEPSNFGNNFEPLARELYPEVEEAMQYLDQFGHAKLTGTGACVFAEVTDEMNVDDILKHAPCKAYLVHSLKESPLRHFKVAS.

Residue Lys9 is part of the active site. An ATP-binding site is contributed by Pro91–Ser101. Residue Asp133 is part of the active site.

The protein belongs to the GHMP kinase family. IspE subfamily.

It carries out the reaction 4-CDP-2-C-methyl-D-erythritol + ATP = 4-CDP-2-C-methyl-D-erythritol 2-phosphate + ADP + H(+). It functions in the pathway isoprenoid biosynthesis; isopentenyl diphosphate biosynthesis via DXP pathway; isopentenyl diphosphate from 1-deoxy-D-xylulose 5-phosphate: step 3/6. In terms of biological role, catalyzes the phosphorylation of the position 2 hydroxy group of 4-diphosphocytidyl-2C-methyl-D-erythritol. The chain is 4-diphosphocytidyl-2-C-methyl-D-erythritol kinase from Acinetobacter baumannii (strain AB307-0294).